We begin with the raw amino-acid sequence, 236 residues long: 2-C-methyl-D-erythritol 4-phosphate cytidylyltransferase (236 aa).

It belongs to the IspD/TarI cytidylyltransferase family. IspD subfamily.

The catalysed reaction is 2-C-methyl-D-erythritol 4-phosphate + CTP + H(+) = 4-CDP-2-C-methyl-D-erythritol + diphosphate. Its pathway is isoprenoid biosynthesis; isopentenyl diphosphate biosynthesis via DXP pathway; isopentenyl diphosphate from 1-deoxy-D-xylulose 5-phosphate: step 2/6. Its function is as follows. Catalyzes the formation of 4-diphosphocytidyl-2-C-methyl-D-erythritol from CTP and 2-C-methyl-D-erythritol 4-phosphate (MEP). The protein is 2-C-methyl-D-erythritol 4-phosphate cytidylyltransferase of Pseudomonas syringae pv. syringae (strain B728a).